The primary structure comprises 93 residues: YcgL domain-containing protein Shew_2183 (93 aa).

In terms of domain architecture, YcgL spans 1 to 85 (MICAVYKSRL…PPVNLLEEYK (85 aa)).

The chain is YcgL domain-containing protein Shew_2183 from Shewanella loihica (strain ATCC BAA-1088 / PV-4).